The chain runs to 136 residues: MSIIKEFREFAMRGNVVDLAVGVIIGAAFGKIVSSLVSDIIMPPLGLLIGGVDFKQLSLILRDAQGEIPAVVMNYGAFIQNIFDFVIVAFAIFIAIKLMNKMRRKQEDTPAAAPKPSAEEKLLAEIRDLLKEQHKQ.

Helical transmembrane passes span 10-30 and 76-96; these read FAMR…AAFG and GAFI…FIAI.

It belongs to the MscL family. As to quaternary structure, homopentamer.

The protein resides in the cell inner membrane. In terms of biological role, channel that opens in response to stretch forces in the membrane lipid bilayer. May participate in the regulation of osmotic pressure changes within the cell. The protein is Large-conductance mechanosensitive channel of Pectobacterium atrosepticum (strain SCRI 1043 / ATCC BAA-672) (Erwinia carotovora subsp. atroseptica).